A 455-amino-acid chain; its full sequence is MTTKILPSQPKVGMVSLGCPKALVDSERILTKLRADGYGLSPDYAGADVVLVNTCGFLDSAKEESLEAIGEAMAENGRVIVTGCMGKEADVIRARFPNVLAVTGAHQYEQVVEAVHDAAPPTQGPFVDLVPEGGLKLTPRHYSYLKISEGCNHSCAFCIIPDLRGKLVSRRIDAVLREAEKLVAAGTKELLVISQDTSAYGVDIRHDPRQWHGREIRAHMTDLARELGQLRTSEGRAPWVRLHYVYPYPHVDAVIPLMAEGLLTPYLDIPFQHASPSVLKRMKRPANEAKVLERLKSWRAIAPDIAIRSSFVVGFPGETEADFQYLLDWLEEAQLDRVGAFRFEPVAGAQANALPEPVPDEVKEERYQRIMAKTAAISAAKLEAKIGRTLPVIIDEVGEADEDGSIGATGRSQADAPEIDGHVYLRDVAATLKAGDIVDVEIEDADEHDLFGVVT.

Residues 10–120 enclose the MTTase N-terminal domain; it reads PKVGMVSLGC…VVEAVHDAAP (111 aa). [4Fe-4S] cluster contacts are provided by C19, C55, C84, C151, C155, and C158. One can recognise a Radical SAM core domain in the interval 137 to 380; the sequence is LTPRHYSYLK…MAKTAAISAA (244 aa). A TRAM domain is found at 383-455; that stretch reads EAKIGRTLPV…DEHDLFGVVT (73 aa).

The protein belongs to the methylthiotransferase family. RimO subfamily. [4Fe-4S] cluster serves as cofactor.

The protein localises to the cytoplasm. The enzyme catalyses L-aspartate(89)-[ribosomal protein uS12]-hydrogen + (sulfur carrier)-SH + AH2 + 2 S-adenosyl-L-methionine = 3-methylsulfanyl-L-aspartate(89)-[ribosomal protein uS12]-hydrogen + (sulfur carrier)-H + 5'-deoxyadenosine + L-methionine + A + S-adenosyl-L-homocysteine + 2 H(+). Catalyzes the methylthiolation of an aspartic acid residue of ribosomal protein uS12. The polypeptide is Ribosomal protein uS12 methylthiotransferase RimO (Sphingopyxis alaskensis (strain DSM 13593 / LMG 18877 / RB2256) (Sphingomonas alaskensis)).